The chain runs to 218 residues: Small ribosomal subunit protein uS3 (218 aa).

Residues Ile-40–Lys-109 enclose the KH type-2 domain.

This sequence belongs to the universal ribosomal protein uS3 family. Part of the 30S ribosomal subunit. Forms a tight complex with proteins S10 and S14.

Its function is as follows. Binds the lower part of the 30S subunit head. Binds mRNA in the 70S ribosome, positioning it for translation. The sequence is that of Small ribosomal subunit protein uS3 from Orientia tsutsugamushi (strain Boryong) (Rickettsia tsutsugamushi).